A 533-amino-acid chain; its full sequence is Probable protein kinase UbiB (533 aa).

A helical transmembrane segment spans residues 24–44 (LILELPMLPWWLRLLGATLPW). Positions 126–494 (RFEREPLASA…WKGSRHDWLG (369 aa)) constitute a Protein kinase domain. ATP is bound by residues 132 to 140 (LASASVAQV) and lysine 154. The active-site Proton acceptor is aspartate 289. The helical transmembrane segment at 510–530 (LGQQLEAWPAWVMLAGGVFLI) threads the bilayer.

Belongs to the ABC1 family. UbiB subfamily.

It is found in the cell inner membrane. It functions in the pathway cofactor biosynthesis; ubiquinone biosynthesis [regulation]. Its function is as follows. Is probably a protein kinase regulator of UbiI activity which is involved in aerobic coenzyme Q (ubiquinone) biosynthesis. This is Probable protein kinase UbiB from Pseudomonas aeruginosa (strain ATCC 15692 / DSM 22644 / CIP 104116 / JCM 14847 / LMG 12228 / 1C / PRS 101 / PAO1).